A 199-amino-acid polypeptide reads, in one-letter code: Protein-methionine-sulfoxide reductase heme-binding subunit MsrQ (199 aa).

4 helical membrane-spanning segments follow: residues tryptophan 10–isoleucine 30, leucine 82–isoleucine 102, proline 116–threonine 136, and valine 153–serine 173.

Belongs to the MsrQ family. In terms of assembly, heterodimer of a catalytic subunit (MsrP) and a heme-binding subunit (MsrQ). Requires FMN as cofactor. Heme b serves as cofactor.

It localises to the cell inner membrane. In terms of biological role, part of the MsrPQ system that repairs oxidized periplasmic proteins containing methionine sulfoxide residues (Met-O), using respiratory chain electrons. Thus protects these proteins from oxidative-stress damage caused by reactive species of oxygen and chlorine generated by the host defense mechanisms. MsrPQ is essential for the maintenance of envelope integrity under bleach stress, rescuing a wide series of structurally unrelated periplasmic proteins from methionine oxidation, including the primary periplasmic chaperone SurA and the lipoprotein Pal. MsrQ provides electrons for reduction to the reductase catalytic subunit MsrP, using the quinone pool of the respiratory chain. In Salmonella enteritidis PT4 (strain P125109), this protein is Protein-methionine-sulfoxide reductase heme-binding subunit MsrQ.